The following is a 396-amino-acid chain: Elongation factor Tu (396 aa).

The region spanning 10–205 (KPHVNIGTIG…ACDESIPDPV (196 aa)) is the tr-type G domain. A G1 region spans residues 19-26 (GHVDHGKT). 19–26 (GHVDHGKT) contacts GTP. Thr-26 serves as a coordination point for Mg(2+). Residues 62-66 (GITIN) are G2. The segment at 83 to 86 (DAPG) is G3. Residues 83–87 (DAPGH) and 138–141 (NKCD) contribute to the GTP site. Residues 138 to 141 (NKCD) form a G4 region. The tract at residues 175–177 (SAL) is G5.

Belongs to the TRAFAC class translation factor GTPase superfamily. Classic translation factor GTPase family. EF-Tu/EF-1A subfamily. As to quaternary structure, monomer.

It is found in the cytoplasm. The enzyme catalyses GTP + H2O = GDP + phosphate + H(+). GTP hydrolase that promotes the GTP-dependent binding of aminoacyl-tRNA to the A-site of ribosomes during protein biosynthesis. In Corynebacterium kroppenstedtii (strain DSM 44385 / JCM 11950 / CIP 105744 / CCUG 35717), this protein is Elongation factor Tu.